The sequence spans 800 residues: Serine/threonine-protein kinase KIN4 (800 aa).

The Protein kinase domain maps to 46–313 (YIIGSTLGEG…LQTIKRHVWL (268 aa)). Residues 52–60 (LGEGEFGKV) and K80 contribute to the ATP site. D175 functions as the Proton acceptor in the catalytic mechanism. Disordered stretches follow at residues 331-397 (LQKE…GSKV) and 438-487 (SARH…TSFT). A compositionally biased stretch (low complexity) spans 348–358 (STYSSSASSYS). A phosphoserine mark is found at S365 and S388. 2 stretches are compositionally biased toward polar residues: residues 380–395 (QLATSRPASPTFSTGS) and 459–473 (GSPTTARTRNAPSSK). A Phosphoserine modification is found at S521. Disordered regions lie at residues 629 to 661 (EPTNSTDEDHVESQLENVGHSSNKSDASSDKDS) and 678 to 754 (SLNG…PGRS). The span at 678–721 (SLNGSRSTVESRTSKGNAPPVSSRNPSGQSNRSNIKITQQQPRN) shows a compositional bias: polar residues. A compositionally biased stretch (basic and acidic residues) spans 727 to 740 (PNPDKKINDNRIRD). S748 is subject to Phosphoserine.

This sequence belongs to the protein kinase superfamily. Ser/Thr protein kinase family.

It carries out the reaction L-seryl-[protein] + ATP = O-phospho-L-seryl-[protein] + ADP + H(+). The enzyme catalyses L-threonyl-[protein] + ATP = O-phospho-L-threonyl-[protein] + ADP + H(+). Functionally, this protein is probably a serine/threonine protein kinase. The sequence is that of Serine/threonine-protein kinase KIN4 (KIN4) from Saccharomyces cerevisiae (strain ATCC 204508 / S288c) (Baker's yeast).